The primary structure comprises 173 residues: Large ribosomal subunit protein bL9 (173 aa).

A disordered region spans residues 150–173 (KQEDKKSLSKKLNKADEQGERAEV).

This sequence belongs to the bacterial ribosomal protein bL9 family.

Binds to the 23S rRNA. The protein is Large ribosomal subunit protein bL9 of Borreliella burgdorferi (strain ZS7) (Borrelia burgdorferi).